An 85-amino-acid chain; its full sequence is Small ribosomal subunit protein uS12m (85 aa).

It belongs to the universal ribosomal protein uS12 family.

The protein resides in the mitochondrion matrix. It is found in the kinetoplast. Its function is as follows. Protein S12 is involved in the translation initiation step. The chain is Small ribosomal subunit protein uS12m (RPS12) from Leishmania tarentolae (Sauroleishmania tarentolae).